Reading from the N-terminus, the 96-residue chain is Large ribosomal subunit protein uL23 (96 aa).

The protein belongs to the universal ribosomal protein uL23 family. As to quaternary structure, part of the 50S ribosomal subunit. Contacts protein L29, and trigger factor when it is bound to the ribosome.

Functionally, one of the early assembly proteins it binds 23S rRNA. One of the proteins that surrounds the polypeptide exit tunnel on the outside of the ribosome. Forms the main docking site for trigger factor binding to the ribosome. The polypeptide is Large ribosomal subunit protein uL23 (Finegoldia magna (strain ATCC 29328 / DSM 20472 / WAL 2508) (Peptostreptococcus magnus)).